The sequence spans 203 residues: Glycerol-3-phosphate acyltransferase (203 aa).

The next 6 helical transmembrane spans lie at Ile-3–Ser-23, Lys-51–Val-71, Phe-74–Leu-94, Ala-116–Phe-136, Ser-140–Thr-160, and Pro-164–Trp-178.

Belongs to the PlsY family. In terms of assembly, probably interacts with PlsX.

Its subcellular location is the cell inner membrane. The catalysed reaction is an acyl phosphate + sn-glycerol 3-phosphate = a 1-acyl-sn-glycero-3-phosphate + phosphate. It functions in the pathway lipid metabolism; phospholipid metabolism. Functionally, catalyzes the transfer of an acyl group from acyl-phosphate (acyl-PO(4)) to glycerol-3-phosphate (G3P) to form lysophosphatidic acid (LPA). This enzyme utilizes acyl-phosphate as fatty acyl donor, but not acyl-CoA or acyl-ACP. This Burkholderia pseudomallei (strain 1710b) protein is Glycerol-3-phosphate acyltransferase.